The sequence spans 174 residues: MNYFELFKFPPAFDIDTALLAERYRELQRAVHPDKFANDTEQQKLLSVQRTAQVNDGFQTLKDPIRRAEHMLSLRGIELSHETTTVKDTGFLMQQMEWREALEDIRDSADPQASIDELYQSFAEYREQLTQQLTQLLTSEQAEDALLAADQVRKLKFMAKLHDELTRVEDALLD.

In terms of domain architecture, J spans 2–74; it reads NYFELFKFPP…IRRAEHMLSL (73 aa).

Belongs to the HscB family. Interacts with HscA and stimulates its ATPase activity.

Co-chaperone involved in the maturation of iron-sulfur cluster-containing proteins. Seems to help targeting proteins to be folded toward HscA. This is Co-chaperone protein HscB homolog from Shewanella baltica (strain OS195).